The sequence spans 205 residues: Ribosomal RNA small subunit methyltransferase G (205 aa).

Residues glycine 66, phenylalanine 71, 119–120 (IE), and arginine 135 each bind S-adenosyl-L-methionine.

It belongs to the methyltransferase superfamily. RNA methyltransferase RsmG family.

The protein localises to the cytoplasm. It catalyses the reaction guanosine(527) in 16S rRNA + S-adenosyl-L-methionine = N(7)-methylguanosine(527) in 16S rRNA + S-adenosyl-L-homocysteine. Specifically methylates the N7 position of guanine in position 527 of 16S rRNA. In Rhizobium etli (strain ATCC 51251 / DSM 11541 / JCM 21823 / NBRC 15573 / CFN 42), this protein is Ribosomal RNA small subunit methyltransferase G.